An 865-amino-acid chain; its full sequence is MGKIADTPMMVQYHEIKAQYPDAFVFYRLGDFYELFEEDAIQGAKILELTLTARNKNSENPVPMAGIPHHAAQNYIDILVDQGYKVAIVEQMEDPAVAKGMVKRDVVQLVTPGTKMADGAGGDKQNNYLAAVLPAKNVWSIAYVDLSTGELRATTTGRFEDVMDELSSLEVKEVVLSKNDVATTEQQIASQLGERGIVISAQGTAEPSATVSFLTQALKVTSEIEATTILLNYIFDTQRRSLDHIVPATSYERLKFLKFNQDTRSNLDLVENMRTKKKAGSLLGLIDRTNTAMGGRLLKQWLLKPLRESSDIEARLDLVQSFQNDFLTRGALQDHLKSVYDLERLAARAAMGTMNARELVQLKRSLRAIPGIKSVLLQADTTLSNAGQQLDDMTDLADLIDVAIVDEPPVSVREGNIINDGFDERIDGYRQVLKDNQQWLAQLEIDERAQTGINSLKVGYNKNFGYYIEVTKANIGRLATDRYQRLQTLTNAERFVTPALKQHESLIIEAQAKRTEREYELFVTVREHVKSDISRIQTLAQHIARLDVLSSLADVADNQRFVRPTFTNQHVIHIMQGRHPVVESILDAGDFVANDVILDESINMQLITGPNMAGKSTYMRELALIVILAQMGSFVPADVAELPIFDQIFTRIGANDDMAMGQSTFMVEMAEANDALQQATANSLVLFDELGRGTATYDGMALAQAIIEFLDKHIHAKTLFSTHYHELTVLADNHTSIENVHVGAVEDDEGQLHFLHQIQSGPADKSYGIHVAALAGLPKELIDNATSILHDLEAGKMIVTQTNDQVASAVIQPDAHLSEQVALFDMTVTDDKTQKILDALDNYDILNMTPVDAINALNRLKKMRS.

Gly609 to Ser616 is an ATP binding site.

The protein belongs to the DNA mismatch repair MutS family.

This protein is involved in the repair of mismatches in DNA. It is possible that it carries out the mismatch recognition step. This protein has a weak ATPase activity. The protein is DNA mismatch repair protein MutS of Leuconostoc citreum (strain KM20).